Here is a 384-residue protein sequence, read N- to C-terminus: NADH-quinone oxidoreductase subunit D 2 (384 aa).

It belongs to the complex I 49 kDa subunit family. In terms of assembly, NDH-1 is composed of 14 different subunits. Subunits NuoB, C, D, E, F, and G constitute the peripheral sector of the complex.

It is found in the cell membrane. It catalyses the reaction a quinone + NADH + 5 H(+)(in) = a quinol + NAD(+) + 4 H(+)(out). NDH-1 shuttles electrons from NADH, via FMN and iron-sulfur (Fe-S) centers, to quinones in the respiratory chain. The immediate electron acceptor for the enzyme in this species is believed to be a menaquinone. Couples the redox reaction to proton translocation (for every two electrons transferred, four hydrogen ions are translocated across the cytoplasmic membrane), and thus conserves the redox energy in a proton gradient. This chain is NADH-quinone oxidoreductase subunit D 2, found in Symbiobacterium thermophilum (strain DSM 24528 / JCM 14929 / IAM 14863 / T).